Reading from the N-terminus, the 545-residue chain is Glucose starvation modulator protein 1 (545 aa).

A DNA-binding region (zn(2)-C6 fungal-type) is located at residues Cys-20 to Cys-48. The span at Lys-51 to Arg-60 shows a compositional bias: basic residues. Disordered stretches follow at residues Lys-51–Asp-131 and Tyr-228–Gln-270. Residues Ser-61–Ala-71 are compositionally biased toward basic and acidic residues. Residues Ala-72 to Thr-92 are compositionally biased toward polar residues. Low complexity predominate over residues Thr-98–Thr-110. Residues Asn-111–Ile-125 are compositionally biased toward polar residues. Residues Gln-257 to Gln-270 are compositionally biased toward low complexity. The 71-residue stretch at Glu-416–Gly-486 folds into the PAS domain.

This sequence belongs to the ERT1/acuK family.

It localises to the nucleus. Transcription factor which regulates nonfermentable carbon utilization. The chain is Glucose starvation modulator protein 1 (GSM1) from Zygosaccharomyces rouxii (strain ATCC 2623 / CBS 732 / NBRC 1130 / NCYC 568 / NRRL Y-229).